The following is a 235-amino-acid chain: Aspartate/glutamate leucyltransferase (235 aa).

This sequence belongs to the R-transferase family. Bpt subfamily.

It is found in the cytoplasm. It catalyses the reaction N-terminal L-glutamyl-[protein] + L-leucyl-tRNA(Leu) = N-terminal L-leucyl-L-glutamyl-[protein] + tRNA(Leu) + H(+). The catalysed reaction is N-terminal L-aspartyl-[protein] + L-leucyl-tRNA(Leu) = N-terminal L-leucyl-L-aspartyl-[protein] + tRNA(Leu) + H(+). Its function is as follows. Functions in the N-end rule pathway of protein degradation where it conjugates Leu from its aminoacyl-tRNA to the N-termini of proteins containing an N-terminal aspartate or glutamate. The polypeptide is Aspartate/glutamate leucyltransferase (Pseudomonas fluorescens (strain SBW25)).